We begin with the raw amino-acid sequence, 1905 residues long: Alpha-2-macroglobulin (1905 aa).

An N-terminal signal peptide occupies residues methionine 1–glycine 21. Residue cysteine 22 is the site of N-palmitoyl cysteine attachment. Residue cysteine 22 is the site of S-diacylglycerol cysteine attachment. Residues cysteine 1438–glutamine 1441 constitute a cross-link (isoglutamyl cysteine thioester (Cys-Gln)).

This sequence belongs to the protease inhibitor I39 (alpha-2-macroglobulin) family. Bacterial alpha-2-macroglobulin subfamily.

The protein resides in the cell membrane. In terms of biological role, protects the bacterial cell from host peptidases. The polypeptide is Alpha-2-macroglobulin (Pasteurella multocida (strain Pm70)).